The following is a 413-amino-acid chain: Tyrosine--tRNA ligase (413 aa).

Y34 is a binding site for L-tyrosine. Residues 39–48 carry the 'HIGH' region motif; sequence CTAQSLHVGN. L-tyrosine is bound by residues Y171 and Q175. The 'KMSKS' region signature appears at 231-235; sequence KMGKT. K234 serves as a coordination point for ATP. An S4 RNA-binding domain is found at 346 to 411; the sequence is IPITELLVTI…GKKCHILVKI (66 aa).

This sequence belongs to the class-I aminoacyl-tRNA synthetase family. TyrS type 1 subfamily. As to quaternary structure, homodimer.

The protein localises to the cytoplasm. The catalysed reaction is tRNA(Tyr) + L-tyrosine + ATP = L-tyrosyl-tRNA(Tyr) + AMP + diphosphate + H(+). In terms of biological role, catalyzes the attachment of tyrosine to tRNA(Tyr) in a two-step reaction: tyrosine is first activated by ATP to form Tyr-AMP and then transferred to the acceptor end of tRNA(Tyr). The sequence is that of Tyrosine--tRNA ligase from Orientia tsutsugamushi (strain Boryong) (Rickettsia tsutsugamushi).